A 274-amino-acid polypeptide reads, in one-letter code: 2,3,4,5-tetrahydropyridine-2,6-dicarboxylate N-succinyltransferase (274 aa).

Substrate-binding residues include Arg104 and Asp141.

Belongs to the transferase hexapeptide repeat family. As to quaternary structure, homotrimer.

It is found in the cytoplasm. It carries out the reaction (S)-2,3,4,5-tetrahydrodipicolinate + succinyl-CoA + H2O = (S)-2-succinylamino-6-oxoheptanedioate + CoA. It participates in amino-acid biosynthesis; L-lysine biosynthesis via DAP pathway; LL-2,6-diaminopimelate from (S)-tetrahydrodipicolinate (succinylase route): step 1/3. This Photorhabdus laumondii subsp. laumondii (strain DSM 15139 / CIP 105565 / TT01) (Photorhabdus luminescens subsp. laumondii) protein is 2,3,4,5-tetrahydropyridine-2,6-dicarboxylate N-succinyltransferase.